The chain runs to 410 residues: ATP phosphoribosyltransferase regulatory subunit (410 aa).

This sequence belongs to the class-II aminoacyl-tRNA synthetase family. HisZ subfamily. As to quaternary structure, heteromultimer composed of HisG and HisZ subunits.

The protein resides in the cytoplasm. The protein operates within amino-acid biosynthesis; L-histidine biosynthesis; L-histidine from 5-phospho-alpha-D-ribose 1-diphosphate: step 1/9. Required for the first step of histidine biosynthesis. May allow the feedback regulation of ATP phosphoribosyltransferase activity by histidine. The protein is ATP phosphoribosyltransferase regulatory subunit of Synechococcus sp. (strain JA-3-3Ab) (Cyanobacteria bacterium Yellowstone A-Prime).